The primary structure comprises 168 residues: Photosystem I assembly protein Ycf3 (168 aa).

TPR repeat units lie at residues 35–68 (AFAY…EIDP), 72–105 (SYIL…NPFL), and 120–153 (GEQA…TPGN).

It belongs to the Ycf3 family.

The protein resides in the plastid. It localises to the chloroplast thylakoid membrane. Its function is as follows. Essential for the assembly of the photosystem I (PSI) complex. May act as a chaperone-like factor to guide the assembly of the PSI subunits. The polypeptide is Photosystem I assembly protein Ycf3 (Morus indica (Mulberry)).